The following is a 408-amino-acid chain: Beta-ureidopropionase (408 aa).

The region spanning 90–360 is the CN hydrolase domain; that stretch reads VRVGLIQNSI…DGLLISDMDL (271 aa). Glu137 functions as the Proton acceptor in the catalytic mechanism. Lys212 acts as the Proton donor in catalysis. Residue Cys249 is the Nucleophile of the active site.

This sequence belongs to the carbon-nitrogen hydrolase superfamily. BUP family. As to quaternary structure, homodimer, homotetramer, homooctamer; can also form higher homooligomers.

Its subcellular location is the cytoplasm. It carries out the reaction 3-(carbamoylamino)propanoate + H2O + 2 H(+) = beta-alanine + NH4(+) + CO2. The catalysed reaction is 3-(carbamoylamino)-2-methylpropanoate + H2O + 2 H(+) = (R)-3-amino-2-methylpropanoate + NH4(+) + CO2. Its pathway is amino-acid biosynthesis; beta-alanine biosynthesis. In terms of biological role, catalyzes a late step in pyrimidine degradation. Converts N-carbamoyl-beta-aminoisobutyrate and N-carbamoyl-beta-alanine (3-ureidopropanoate) to, respectively, beta-aminoisobutyrate and beta-alanine, ammonia and carbon dioxide. Involved in the recycling of nitrogen from nucleobases to general nitrogen metabolism. The protein is Beta-ureidopropionase of Arabidopsis thaliana (Mouse-ear cress).